Reading from the N-terminus, the 468-residue chain is Zinc finger protein 672 (468 aa).

4 C2H2-type zinc fingers span residues 15–37, 43–65, 71–93, and 100–123; these read YSCS…ERAH, FRCL…RWTH, YICS…LGTH, and CPCR…VRQH. The C2H2-type 5; degenerate zinc finger occupies 129–151; the sequence is HRCPLCARSFRQSALPFHLARAH. C2H2-type zinc fingers lie at residues 167–189, 202–224, 230–252, 258–280, 286–308, 314–336, 342–364, 370–392, and 398–420; these read YHCT…SRIH, HRCG…LQRH, FKCP…QRTH, YACN…QRSH, HICA…QRSH, FPCP…LRTH, YHCE…LRNH, HKCP…RKTH, and AECT…QRSH.

It belongs to the krueppel C2H2-type zinc-finger protein family.

The protein localises to the nucleus. Functionally, may be involved in transcriptional regulation. This Rattus norvegicus (Rat) protein is Zinc finger protein 672 (Znf672).